Reading from the N-terminus, the 91-residue chain is Potassium channel toxin BuTXK-beta (91 aa).

The first 20 residues, 1–20 (MQRNLVVLLLLGMVALSSCG), serve as a signal peptide directing secretion. Residues 21–27 (LREKHFQ) constitute a propeptide that is removed on maturation. One can recognise a BetaSPN-type CS-alpha/beta domain in the interval 54-91 (QFGCPAYQGYCDDHCQDIKKEEGFCHGMKCKCGIPMGF). 3 cysteine pairs are disulfide-bonded: Cys57-Cys78, Cys64-Cys83, and Cys68-Cys85.

It belongs to the long chain scorpion toxin family. Class 1 subfamily. Expressed by the venom gland.

Its subcellular location is the secreted. In terms of biological role, inhibits voltage-gated potassium channel. In Buthus israelis (Israeli scorpion), this protein is Potassium channel toxin BuTXK-beta.